We begin with the raw amino-acid sequence, 123 residues long: Small ribosomal subunit protein uS12 (123 aa).

Aspartate 89 is modified (3-methylthioaspartic acid). The tract at residues 100-123 (GSLDTSGVKGRNQGRSKYGTKKPK) is disordered. Basic residues predominate over residues 111–123 (NQGRSKYGTKKPK).

It belongs to the universal ribosomal protein uS12 family. As to quaternary structure, part of the 30S ribosomal subunit. Contacts proteins S8 and S17. May interact with IF1 in the 30S initiation complex.

In terms of biological role, with S4 and S5 plays an important role in translational accuracy. Functionally, interacts with and stabilizes bases of the 16S rRNA that are involved in tRNA selection in the A site and with the mRNA backbone. Located at the interface of the 30S and 50S subunits, it traverses the body of the 30S subunit contacting proteins on the other side and probably holding the rRNA structure together. The combined cluster of proteins S8, S12 and S17 appears to hold together the shoulder and platform of the 30S subunit. The chain is Small ribosomal subunit protein uS12 from Pseudomonas syringae pv. syringae (strain B728a).